Reading from the N-terminus, the 692-residue chain is DNA repair protein RAD34 (692 aa).

Positions 1–38 are disordered; the sequence is MAKRLLESSQNDQANRKNSKIEKKEVSFYEEEETDDSF. Positions 28-38 are enriched in acidic residues; it reads FYEEEETDDSF.

Belongs to the XPC family.

It localises to the nucleus. Functionally, involved in nucleotide excision repair (NER) of damaged ribosomal DNA (rDNA). Required for the repair of the RNA polymerase I-transcribed strand of rDNA. This is DNA repair protein RAD34 (RAD34) from Saccharomyces cerevisiae (strain ATCC 204508 / S288c) (Baker's yeast).